A 132-amino-acid chain; its full sequence is Large ribosomal subunit protein uL14 (132 aa).

Belongs to the universal ribosomal protein uL14 family. As to quaternary structure, part of the 50S ribosomal subunit. Forms a cluster with proteins L3 and L24e, part of which may contact the 16S rRNA in 2 intersubunit bridges.

Binds to 23S rRNA. Forms part of two intersubunit bridges in the 70S ribosome. The chain is Large ribosomal subunit protein uL14 from Methanococcus aeolicus (strain ATCC BAA-1280 / DSM 17508 / OCM 812 / Nankai-3).